A 255-amino-acid polypeptide reads, in one-letter code: Hydroxyacylglutathione hydrolase (255 aa).

Zn(2+) is bound by residues histidine 56, histidine 58, aspartate 60, histidine 61, histidine 114, aspartate 133, and histidine 171.

Belongs to the metallo-beta-lactamase superfamily. Glyoxalase II family. In terms of assembly, monomer. Zn(2+) is required as a cofactor.

It carries out the reaction an S-(2-hydroxyacyl)glutathione + H2O = a 2-hydroxy carboxylate + glutathione + H(+). Its pathway is secondary metabolite metabolism; methylglyoxal degradation; (R)-lactate from methylglyoxal: step 2/2. Functionally, thiolesterase that catalyzes the hydrolysis of S-D-lactoyl-glutathione to form glutathione and D-lactic acid. The sequence is that of Hydroxyacylglutathione hydrolase from Cereibacter sphaeroides (strain ATCC 17023 / DSM 158 / JCM 6121 / CCUG 31486 / LMG 2827 / NBRC 12203 / NCIMB 8253 / ATH 2.4.1.) (Rhodobacter sphaeroides).